The sequence spans 181 residues: Large ribosomal subunit protein uL5 (181 aa).

The protein belongs to the universal ribosomal protein uL5 family. Part of the 50S ribosomal subunit; contacts the 5S rRNA and probably tRNA. Forms a bridge to the 30S subunit in the 70S ribosome.

This is one of the proteins that bind and probably mediate the attachment of the 5S RNA into the large ribosomal subunit, where it forms part of the central protuberance. In the 70S ribosome it contacts protein S13 of the 30S subunit (bridge B1b), connecting the 2 subunits; this bridge is implicated in subunit movement. May contact the P site tRNA; the 5S rRNA and some of its associated proteins might help stabilize positioning of ribosome-bound tRNAs. In Methanococcus aeolicus (strain ATCC BAA-1280 / DSM 17508 / OCM 812 / Nankai-3), this protein is Large ribosomal subunit protein uL5.